The chain runs to 183 residues: Pyruvoyl-dependent arginine decarboxylase (183 aa).

Position 44 is a pyruvic acid (Ser) (S44).

It belongs to the PdaD family. Pyruvate is required as a cofactor.

The catalysed reaction is L-arginine + H(+) = agmatine + CO2. The chain is Pyruvoyl-dependent arginine decarboxylase from Nitrosopumilus maritimus (strain SCM1).